Reading from the N-terminus, the 260-residue chain is Flap endonuclease Xni (260 aa).

Asp-105 serves as a coordination point for Mg(2+). The 5'-3' exonuclease domain maps to 164 to 254; sequence SQFLDLLALA…LKDFRVNGPA (91 aa). Positions 172, 173, 181, 183, and 186 each coordinate K(+). The tract at residues 185-190 is interaction with DNA; the sequence is GIGPKS.

This sequence belongs to the Xni family. Mg(2+) serves as cofactor. It depends on K(+) as a cofactor.

In terms of biological role, has flap endonuclease activity. During DNA replication, flap endonucleases cleave the 5'-overhanging flap structure that is generated by displacement synthesis when DNA polymerase encounters the 5'-end of a downstream Okazaki fragment. This chain is Flap endonuclease Xni, found in Shewanella sp. (strain ANA-3).